We begin with the raw amino-acid sequence, 409 residues long: Failed axon connections homolog (409 aa).

Residues 68-88 (YLTGGALLAAAAYLLHELLVI) form a helical membrane-spanning segment. The interval 372–393 (DEGAENSFSRTPDTDFTGHSLF) is disordered.

It belongs to the FAX family.

It is found in the membrane. Functionally, may play a role in axonal development. The sequence is that of Failed axon connections homolog (Faxc) from Mus musculus (Mouse).